We begin with the raw amino-acid sequence, 274 residues long: Insulin-like growth factor-binding protein-like 1 (274 aa).

A signal peptide spans 1 to 21; sequence MPRSPGLFLLLLVLQPLPALG. The IGFBP N-terminal domain occupies 30 to 105; that stretch reads RNPECGPCRP…PEGTGLCVCA (76 aa). 7 cysteine pairs are disulfide-bonded: cysteine 34/cysteine 59, cysteine 37/cysteine 61, cysteine 42/cysteine 62, cysteine 48/cysteine 65, cysteine 73/cysteine 87, cysteine 81/cysteine 102, and cysteine 111/cysteine 147. One can recognise a Kazal-like domain in the interval 91 to 149; the sequence is AAGAAPEGTGLCVCAQRGSVCGSDGRSYPSVCALRLRARQAPRALPGHLHKARDGPCEF. The 105-residue stretch at 151-255 folds into the Ig-like C2-type domain; the sequence is PVVITPPQSV…GEAQSHGTVT (105 aa). N-linked (GlcNAc...) asparagine glycosylation occurs at asparagine 162. Residues cysteine 172 and cysteine 239 are joined by a disulfide bond.

The protein localises to the secreted. Functionally, IGF-binding proteins prolong the half-life of IGFs and have been shown to either inhibit or stimulate the growth promoting effects of the IGFs in cell culture. They alter the interaction of IGFs with their cell surface receptors. This chain is Insulin-like growth factor-binding protein-like 1 (IGFBPL1), found in Bos taurus (Bovine).